The following is a 317-amino-acid chain: L-lactate dehydrogenase 1 (317 aa).

Residues Val-17, Asp-38, Lys-43, Tyr-69, and 83–84 (GA) contribute to the NAD(+) site. Substrate-binding residues include Gln-86 and Arg-92. NAD(+) is bound by residues Ser-105, 122–124 (ATN), and Ser-147. Substrate is bound at residue 124–127 (NPVD). 152–155 (DSAR) lines the substrate pocket. The active-site Proton acceptor is His-179. The residue at position 223 (Tyr-223) is a Phosphotyrosine. Position 232 (Thr-232) interacts with substrate.

This sequence belongs to the LDH/MDH superfamily. LDH family. Homotetramer.

It localises to the cytoplasm. It catalyses the reaction (S)-lactate + NAD(+) = pyruvate + NADH + H(+). It participates in fermentation; pyruvate fermentation to lactate; (S)-lactate from pyruvate: step 1/1. Catalyzes the conversion of lactate to pyruvate (Potential). Appears to be the primary factor that allows S.aureus growth during nitrosative stress in both aerobically and anaerobically cultured cells. In Staphylococcus aureus (strain MRSA252), this protein is L-lactate dehydrogenase 1.